We begin with the raw amino-acid sequence, 266 residues long: Hydroxyethylthiazole kinase (266 aa).

M39 is a substrate binding site. K115 and T160 together coordinate ATP. G187 contacts substrate.

It belongs to the Thz kinase family. It depends on Mg(2+) as a cofactor.

The catalysed reaction is 5-(2-hydroxyethyl)-4-methylthiazole + ATP = 4-methyl-5-(2-phosphooxyethyl)-thiazole + ADP + H(+). Its pathway is cofactor biosynthesis; thiamine diphosphate biosynthesis; 4-methyl-5-(2-phosphoethyl)-thiazole from 5-(2-hydroxyethyl)-4-methylthiazole: step 1/1. Catalyzes the phosphorylation of the hydroxyl group of 4-methyl-5-beta-hydroxyethylthiazole (THZ). In Staphylococcus aureus (strain MSSA476), this protein is Hydroxyethylthiazole kinase.